The primary structure comprises 258 residues: Imidazole glycerol phosphate synthase subunit HisF (258 aa).

Catalysis depends on residues aspartate 11 and aspartate 130.

The protein belongs to the HisA/HisF family. In terms of assembly, heterodimer of HisH and HisF.

Its subcellular location is the cytoplasm. It catalyses the reaction 5-[(5-phospho-1-deoxy-D-ribulos-1-ylimino)methylamino]-1-(5-phospho-beta-D-ribosyl)imidazole-4-carboxamide + L-glutamine = D-erythro-1-(imidazol-4-yl)glycerol 3-phosphate + 5-amino-1-(5-phospho-beta-D-ribosyl)imidazole-4-carboxamide + L-glutamate + H(+). Its pathway is amino-acid biosynthesis; L-histidine biosynthesis; L-histidine from 5-phospho-alpha-D-ribose 1-diphosphate: step 5/9. Functionally, IGPS catalyzes the conversion of PRFAR and glutamine to IGP, AICAR and glutamate. The HisF subunit catalyzes the cyclization activity that produces IGP and AICAR from PRFAR using the ammonia provided by the HisH subunit. This Yersinia pseudotuberculosis serotype O:3 (strain YPIII) protein is Imidazole glycerol phosphate synthase subunit HisF.